The primary structure comprises 340 residues: Insulin gene enhancer protein ISL-2B (340 aa).

LIM zinc-binding domains are found at residues 9 to 62 and 71 to 125; these read CVGC…CKRD and CAKC…RADH. Positions 172–231 form a DNA-binding region, homeobox; it reads TTRVRTVLNEKQLHTLRTCYNANPRPDALMKEQLVEMTGLSPRVIRVWFQNKRCKDKKRT. A compositionally biased stretch (low complexity) spans 307 to 317; it reads ESGSMGNSSGS. The tract at residues 307–340 is disordered; sequence ESGSMGNSSGSDVTSLSSQLPDTPNSMVPSPMDT. Residues 318-340 show a composition bias toward polar residues; it reads DVTSLSSQLPDTPNSMVPSPMDT.

Its subcellular location is the nucleus. In terms of biological role, binds to one of the cis-acting domain of the insulin gene enhancer. May be involved in subtype specialization of primary motoneurons. The polypeptide is Insulin gene enhancer protein ISL-2B (isl2b) (Oncorhynchus tshawytscha (Chinook salmon)).